Here is a 142-residue protein sequence, read N- to C-terminus: Large ribosomal subunit protein uL11 (142 aa).

It belongs to the universal ribosomal protein uL11 family. In terms of assembly, part of the ribosomal stalk of the 50S ribosomal subunit. Interacts with L10 and the large rRNA to form the base of the stalk. L10 forms an elongated spine to which L12 dimers bind in a sequential fashion forming a multimeric L10(L12)X complex. Post-translationally, one or more lysine residues are methylated.

Forms part of the ribosomal stalk which helps the ribosome interact with GTP-bound translation factors. In Vibrio campbellii (strain ATCC BAA-1116), this protein is Large ribosomal subunit protein uL11.